Here is a 329-residue protein sequence, read N- to C-terminus: Small ribosomal subunit protein RACK1 (329 aa).

7 WD repeats span residues Gly19–Pro59, Gly68–Leu107, Gly110–Leu149, Ala154–Thr193, Asp196–Lys235, Glu237–Glu275, and Pro295–Ser328.

It belongs to the WD repeat G protein beta family. Ribosomal protein RACK1 subfamily.

The polypeptide is Small ribosomal subunit protein RACK1 (gpbB) (Dictyostelium discoideum (Social amoeba)).